We begin with the raw amino-acid sequence, 357 residues long: Glutamine synthetase root isozyme 1 (357 aa).

Residues 19-99 (IIAEYIWIGG…VMCDCYTPQG (81 aa)) form the GS beta-grasp domain. The region spanning 106–357 (KRYSAAKVFS…AETTILWNGN (252 aa)) is the GS catalytic domain.

It belongs to the glutamine synthetase family. As to quaternary structure, homooctamer. Found mainly in the cortical tissues of seedling roots, and in the root tip.

The protein localises to the cytoplasm. It catalyses the reaction L-glutamate + NH4(+) + ATP = L-glutamine + ADP + phosphate + H(+). Functionally, plays a role in the flow of nitrogen into nitrogenous organic compounds. The protein is Glutamine synthetase root isozyme 1 (GLN6) of Zea mays (Maize).